The sequence spans 445 residues: MSTPSAPANPKVGFVSLGCPKALVDSERILTQLRMEGYDVVSTYQDADVVVVNTCGFIDSAKAESLEVIGEAIKENGKVIVTGCMGVEEGNIRDVHPSVLAVTGPQQYEQVVNAVHEVVPPKQDHNPLIDLVPPQGIKLTPRHYAYLKISEGCNHSCSFCIIPSMRGKLVSRPVGDVLDEAQRLVKSGVKELLVISQDTSAYGVDVKYRTGFWNGAPVKTRMTELCEALSTLGVWVRLHYVYPYPHVDELIPLMAAGKILPYLDIPFQHASPKVLKAMKRPAFEDKTLARIKNWREICPELIIRSTFIVGFPGETEEDFQYLLNWLTEAQLDRVGCFQYSPVEGAPANDLDLEVVPDEVKQDRWERFMAHQQEISSARLQQRIGKEIEVLIDEVDENGAVGRCFFDAPEIDGNVFIDGAGDLKPGDKVWCRVTDADEYDLWAETL.

The 111-residue stretch at proline 10–proline 120 folds into the MTTase N-terminal domain. Cysteine 19, cysteine 55, cysteine 84, cysteine 153, cysteine 157, and cysteine 160 together coordinate [4Fe-4S] cluster. The 240-residue stretch at leucine 139–arginine 378 folds into the Radical SAM core domain. Positions glutamine 380–leucine 445 constitute a TRAM domain.

It belongs to the methylthiotransferase family. RimO subfamily. It depends on [4Fe-4S] cluster as a cofactor.

Its subcellular location is the cytoplasm. The enzyme catalyses L-aspartate(89)-[ribosomal protein uS12]-hydrogen + (sulfur carrier)-SH + AH2 + 2 S-adenosyl-L-methionine = 3-methylsulfanyl-L-aspartate(89)-[ribosomal protein uS12]-hydrogen + (sulfur carrier)-H + 5'-deoxyadenosine + L-methionine + A + S-adenosyl-L-homocysteine + 2 H(+). Functionally, catalyzes the methylthiolation of an aspartic acid residue of ribosomal protein uS12. The chain is Ribosomal protein uS12 methylthiotransferase RimO from Pseudomonas fluorescens (strain ATCC BAA-477 / NRRL B-23932 / Pf-5).